The chain runs to 1059 residues: Disks large-associated protein 2 (1059 aa).

Disordered regions lie at residues 31–54 (GEPE…PAEE) and 245–311 (KSHS…SDST). Polar residues predominate over residues 245–261 (KSHSLEGSSKSNINGTK). Over residues 262 to 271 (SDSRVDDHHQ) the composition is skewed to basic and acidic residues. Basic residues predominate over residues 272 to 285 (SHLSKHSKRSKSKE). Residues Ser302, Ser308, Ser390, and Ser456 each carry the phosphoserine modification. Residues 613–669 (YKKTPPPVPPRTTSKPLISVTAQSSTESTQDAYQDSRAQRMSPWPQDSRGGLYNSMD) form a disordered region. Residues 632 to 645 (VTAQSSTESTQDAY) show a composition bias toward polar residues. 4 positions are modified to phosphoserine: Ser667, Ser670, Ser673, and Ser720. Residues 723–756 (VQDSEFPDHQPYPRSDVETATDSDTESRGLREYH) are disordered. The residue at position 743 (Thr743) is a Phosphothreonine. At Ser745 the chain carries Phosphoserine. The segment covering 747–756 (TESRGLREYH) has biased composition (basic and acidic residues). Phosphoserine is present on residues Ser776, Ser811, Ser983, and Ser1012. Residues 985–1025 (ERKEERKIPPPIPKKPPKGKFPITREKSLDLPDRQRQEARR) are disordered. The segment covering 1007-1025 (ITREKSLDLPDRQRQEARR) has biased composition (basic and acidic residues).

This sequence belongs to the SAPAP family. Interacts with DLG4/PSD-95. As to expression, expressed in various brain areas.

The protein resides in the cell membrane. It is found in the postsynaptic density. The protein localises to the synapse. Its function is as follows. May play a role in the molecular organization of synapses and neuronal cell signaling. Could be an adapter protein linking ion channel to the subsynaptic cytoskeleton. May induce enrichment of PSD-95/SAP90 at the plasma membrane. This is Disks large-associated protein 2 from Mus musculus (Mouse).